The following is a 740-amino-acid chain: Leucine-rich repeat neuronal protein 4 (740 aa).

The N-terminal stretch at 1-18 is a signal peptide; the sequence is MRQTLPLLLLTVLRPSWA. The Extracellular portion of the chain corresponds to 19 to 679; it reads DPPQEKVPLF…PCAAFTTKPS (661 aa). N-linked (GlcNAc...) asparagine glycosylation occurs at Asn-42. LRR repeat units follow at residues 51-74, 75-97, 98-123, 125-144, 145-168, 174-197, 203-226, 228-251, 253-276, and 277-300; these read LPAA…GCLP, RTLR…ELGH, LEQL…GPAG, HTLD…TGPA, LSSL…AFAC, LLNL…AFAG, LVTL…WIRD, PKLT…IFKM, PNLQ…IFQD, and TPHL…TLDS. Asn-176 carries an N-linked (GlcNAc...) asparagine glycan. N-linked (GlcNAc...) asparagine glycosylation is found at Asn-289, Asn-379, and Asn-442. A disordered region spans residues 389-517; it reads VAPSAAPATR…QAPNPSLSEG (129 aa). Polar residues-rich tracts occupy residues 430-454 and 490-514; these read APST…STTR and WDRS…NPSL. The Fibronectin type-III domain occupies 579–679; that stretch reads IPDPPRLQGV…PCAAFTTKPS (101 aa). A glycan (N-linked (GlcNAc...) asparagine) is linked at Asn-622. Residues 680–700 traverse the membrane as a helical segment; that stretch reads FALLLSGLCAASGLLLASTVV. Topologically, residues 701 to 740 are cytoplasmic; the sequence is LSACLCRRGQTLGLQRCDTHLVAYKNPAFDDYPLGLQTVS.

The protein resides in the membrane. In terms of biological role, may play an important role in hippocampus-dependent long-lasting memory. The polypeptide is Leucine-rich repeat neuronal protein 4 (LRRN4) (Homo sapiens (Human)).